Reading from the N-terminus, the 330-residue chain is DNA-directed RNA polymerase subunit alpha (330 aa).

Positions 1–225 (MSDLAIPTIS…KQFAALVSHN (225 aa)) are alpha N-terminal domain (alpha-NTD). The alpha C-terminal domain (alpha-CTD) stretch occupies residues 237–330 (VKYAIPEEKY…KKKNKGMDEA (94 aa)).

This sequence belongs to the RNA polymerase alpha chain family. As to quaternary structure, homodimer. The RNAP catalytic core consists of 2 alpha, 1 beta, 1 beta' and 1 omega subunit. When a sigma factor is associated with the core the holoenzyme is formed, which can initiate transcription.

The enzyme catalyses RNA(n) + a ribonucleoside 5'-triphosphate = RNA(n+1) + diphosphate. In terms of biological role, DNA-dependent RNA polymerase catalyzes the transcription of DNA into RNA using the four ribonucleoside triphosphates as substrates. The protein is DNA-directed RNA polymerase subunit alpha of Dehalococcoides mccartyi (strain ATCC BAA-2266 / KCTC 15142 / 195) (Dehalococcoides ethenogenes (strain 195)).